The primary structure comprises 247 residues: MAPQMGYDRAITVFSPDGRLFQVEYAREAVKRGTTAVGIKAADGVVLLVDKRITSRLVEAESIEKIFQIDEHIGAATSGLVADARSLVDRARVEAQVNRVSYDEPIGVEVISKKICDHKQTYTQYGGVRPYGTALLIAGVDDNKPRLFETDPSGALLEYKATAIGAGRNAVVEVFEADYREDMNMDAAILLGMDALYKAAEGKFDAGTLEVGVVSLEDKKFRKLGPEEVENYVQQILEKHKGTESSE.

Belongs to the peptidase T1A family. The 20S proteasome core is composed of 14 alpha and 14 beta subunits that assemble into four stacked heptameric rings, resulting in a barrel-shaped structure. The two inner rings, each composed of seven catalytic beta subunits, are sandwiched by two outer rings, each composed of seven alpha subunits. The catalytic chamber with the active sites is on the inside of the barrel. Has a gated structure, the ends of the cylinder being occluded by the N-termini of the alpha-subunits. Is capped at one or both ends by the proteasome regulatory ATPase, PAN.

Its subcellular location is the cytoplasm. With respect to regulation, the formation of the proteasomal ATPase PAN-20S proteasome complex, via the docking of the C-termini of PAN into the intersubunit pockets in the alpha-rings, triggers opening of the gate for substrate entry. Interconversion between the open-gate and close-gate conformations leads to a dynamic regulation of the 20S proteasome proteolysis activity. Component of the proteasome core, a large protease complex with broad specificity involved in protein degradation. The sequence is that of Proteasome subunit alpha from Methanosarcina acetivorans (strain ATCC 35395 / DSM 2834 / JCM 12185 / C2A).